Reading from the N-terminus, the 1269-residue chain is Furin-like protease 1, isoforms 1/1-X/2 (1269 aa).

The segment at 1–57 (MKNDVVRWSRQPTSNTTNSSSSSRSDSNSTHKHRSKSNKLNARQLGSNAARSCQQRS) is disordered. Residues 13-28 (TSNTTNSSSSSRSDSN) show a composition bias toward low complexity. N-linked (GlcNAc...) asparagine glycans are attached at residues asparagine 15, asparagine 18, and asparagine 28. The segment covering 38 to 57 (NKLNARQLGSNAARSCQQRS) has biased composition (polar residues). Asparagine 108 carries N-linked (GlcNAc...) asparagine glycosylation. The chain crosses the membrane as a helical span at residues 119 to 139 (VFLLALQFSAVVFLCNINVGF). Over residues 150–163 (SAGGSSPAAPSSAP) the composition is skewed to low complexity. Positions 150-187 (SAGGSSPAAPSSAPSSPPTVAVPPPPPPSSALKVDPNG) are disordered. Residues 164–178 (SSPPTVAVPPPPPPS) are compositionally biased toward pro residues. N-linked (GlcNAc...) asparagine glycosylation is present at asparagine 333. The Peptidase S8 domain maps to 340-654 (MWYLNRGGGL…YGLMDAAEMV (315 aa)). Residues aspartate 372 and histidine 413 each act as charge relay system in the active site. A glycan (N-linked (GlcNAc...) asparagine) is linked at asparagine 426. Intrachain disulfides connect cysteine 430–cysteine 579 and cysteine 522–cysteine 552. The Charge relay system role is filled by serine 587. Residue asparagine 606 is glycosylated (N-linked (GlcNAc...) asparagine). One can recognise a P/Homo B domain in the interval 662 to 793 (AVPEQQRCEI…SLIFYGTTQS (132 aa)). Cysteines 669 and 695 form a disulfide. 2 N-linked (GlcNAc...) asparagine glycosylation sites follow: asparagine 727 and asparagine 814. 4 disordered regions span residues 796–875 (PNDP…PPKQ), 891–1015 (ANGK…NSRI), 1031–1050 (ELEP…AKQG), and 1057–1083 (LFKP…PSQT). Composition is skewed to low complexity over residues 811-821 (TTPNSSSTTSN) and 835-851 (PNNF…LPLG). A glycan (N-linked (GlcNAc...) asparagine) is linked at asparagine 857. The span at 858–868 (KSSYVTNNPLL) shows a compositional bias: polar residues. 2 N-linked (GlcNAc...) asparagine glycosylation sites follow: asparagine 897 and asparagine 908. Composition is skewed to low complexity over residues 905-915 (NKGNKSNNGNK) and 929-940 (TTQSTIIQTSTS). Residues 975–985 (KSYDEKSRKVV) are compositionally biased toward basic and acidic residues. A glycan (N-linked (GlcNAc...) asparagine) is linked at asparagine 994. Polar residues predominate over residues 1005–1014 (ESTTTSSNSR). Residues 1062-1074 (NGGNSRQGNTKKS) show a composition bias toward polar residues. The chain crosses the membrane as a helical span at residues 1233 to 1253 (LGLSLLFFMIMQVFFLNFKHA).

The protein belongs to the peptidase S8 family. Furin subfamily. The cofactor is Ca(2+). In terms of tissue distribution, in adults, isoform 1-X is expressed in CNS, fat body and female reproductive tissues, and in embryos, in CNS, tracheal pits, hindgut, posterior spiracles and anal pads.

Its subcellular location is the golgi apparatus membrane. It carries out the reaction Release of mature proteins from their proproteins by cleavage of -Arg-Xaa-Yaa-Arg-|-Zaa- bonds, where Xaa can be any amino acid and Yaa is Arg or Lys. Releases albumin, complement component C3 and von Willebrand factor from their respective precursors.. Its function is as follows. Furin is likely to represent the ubiquitous endoprotease activity within constitutive secretory pathways and capable of cleavage at the RX(K/R)R consensus motif. The chain is Furin-like protease 1, isoforms 1/1-X/2 (Fur1) from Drosophila melanogaster (Fruit fly).